The following is a 255-amino-acid chain: Hydroxyacylglutathione hydrolase (255 aa).

Positions 56, 58, 60, 61, 114, 133, and 171 each coordinate Zn(2+).

The protein belongs to the metallo-beta-lactamase superfamily. Glyoxalase II family. As to quaternary structure, monomer. The cofactor is Zn(2+).

It catalyses the reaction an S-(2-hydroxyacyl)glutathione + H2O = a 2-hydroxy carboxylate + glutathione + H(+). Its pathway is secondary metabolite metabolism; methylglyoxal degradation; (R)-lactate from methylglyoxal: step 2/2. Functionally, thiolesterase that catalyzes the hydrolysis of S-D-lactoyl-glutathione to form glutathione and D-lactic acid. This Nitrobacter winogradskyi (strain ATCC 25391 / DSM 10237 / CIP 104748 / NCIMB 11846 / Nb-255) protein is Hydroxyacylglutathione hydrolase.